A 90-amino-acid polypeptide reads, in one-letter code: Bombyxin B-12 (90 aa).

Residues 1-20 (MMKTTIMFMLVVVISLTYSS) form the signal peptide. 3 disulfide bridges follow: C30/C76, C42/C89, and C75/C80. A propeptide spans 49–67 (SGAQYAPYFWTRQYLGSRG) (c peptide like).

It belongs to the insulin family. As to quaternary structure, heterodimer of a B chain and an A chain linked by two disulfide bonds.

The protein resides in the secreted. Functionally, brain peptide responsible for activation of prothoracic glands to produce ecdysone in insects. The sequence is that of Bombyxin B-12 (BBXB12) from Bombyx mori (Silk moth).